The sequence spans 116 residues: Ribosome-binding factor A (116 aa).

The protein belongs to the RbfA family. In terms of assembly, monomer. Binds 30S ribosomal subunits, but not 50S ribosomal subunits or 70S ribosomes.

Its subcellular location is the cytoplasm. In terms of biological role, one of several proteins that assist in the late maturation steps of the functional core of the 30S ribosomal subunit. Associates with free 30S ribosomal subunits (but not with 30S subunits that are part of 70S ribosomes or polysomes). Required for efficient processing of 16S rRNA. May interact with the 5'-terminal helix region of 16S rRNA. The polypeptide is Ribosome-binding factor A (Streptococcus pneumoniae serotype 4 (strain ATCC BAA-334 / TIGR4)).